Consider the following 242-residue polypeptide: Haloacid dehalogenase-like hydrolase domain-containing protein 3 (242 aa).

This sequence belongs to the HAD-like hydrolase superfamily.

The sequence is that of Haloacid dehalogenase-like hydrolase domain-containing protein 3 (hdhd3) from Danio rerio (Zebrafish).